We begin with the raw amino-acid sequence, 718 residues long: Pentatricopeptide repeat-containing protein At1g22960, mitochondrial (718 aa).

The N-terminal 11 residues, 1 to 11 (MILCLRLCLRA), are a transit peptide targeting the mitochondrion. PPR repeat units follow at residues 167–201 (ALKL…GFLP), 202–236 (SVRN…GIMP), 237–271 (TVIT…NIEF), 272–306 (SEVT…GFAV), 307–341 (TPYS…GIYP), 342–372 (TTST…MAAP), 373–407 (DVVS…DIHP), 408–442 (SIVT…LIFP), 443–477 (DVIT…GIKP), 478–512 (DGYA…DHHA), 514–548 (DLTI…GLVP), 549–583 (DHVT…RLYP), 584–618 (SVIT…GVRP), 619–653 (NVMT…GIPP), and 654–688 (NKYS…EIEP).

It belongs to the PPR family. P subfamily.

The protein localises to the mitochondrion. The sequence is that of Pentatricopeptide repeat-containing protein At1g22960, mitochondrial from Arabidopsis thaliana (Mouse-ear cress).